Reading from the N-terminus, the 686-residue chain is Methionine--tRNA ligase (686 aa).

The 'HIGH' region motif lies at 15-25; sequence PYANGSIHLGH. Zn(2+) contacts are provided by Cys-146, Cys-149, Cys-159, and Cys-162. Residues 332–336 carry the 'KMSKS' region motif; it reads KMSKS. Residue Lys-335 participates in ATP binding. Positions 585-686 constitute a tRNA-binding domain; sequence AFEAVDMRIA…EGAQPGMRVM (102 aa).

It belongs to the class-I aminoacyl-tRNA synthetase family. MetG type 1 subfamily. As to quaternary structure, homodimer. Zn(2+) is required as a cofactor.

The protein localises to the cytoplasm. It carries out the reaction tRNA(Met) + L-methionine + ATP = L-methionyl-tRNA(Met) + AMP + diphosphate. Functionally, is required not only for elongation of protein synthesis but also for the initiation of all mRNA translation through initiator tRNA(fMet) aminoacylation. The sequence is that of Methionine--tRNA ligase from Aliivibrio fischeri (strain ATCC 700601 / ES114) (Vibrio fischeri).